The following is a 118-amino-acid chain: Small ribosomal subunit protein uS13 (118 aa).

Positions 91-118 (HRRSLPLRGQRTKNNARTRKGPKKPIKR) are disordered.

This sequence belongs to the universal ribosomal protein uS13 family. Part of the 30S ribosomal subunit. Forms a loose heterodimer with protein S19. Forms two bridges to the 50S subunit in the 70S ribosome.

Located at the top of the head of the 30S subunit, it contacts several helices of the 16S rRNA. In the 70S ribosome it contacts the 23S rRNA (bridge B1a) and protein L5 of the 50S subunit (bridge B1b), connecting the 2 subunits; these bridges are implicated in subunit movement. Contacts the tRNAs in the A and P-sites. The sequence is that of Small ribosomal subunit protein uS13 from Hydrogenovibrio crunogenus (strain DSM 25203 / XCL-2) (Thiomicrospira crunogena).